We begin with the raw amino-acid sequence, 415 residues long: Transposase for insertion sequence element IS1081 (415 aa).

Belongs to the transposase mutator family.

Its function is as follows. Required for the transposition of the insertion element. The polypeptide is Transposase for insertion sequence element IS1081 (Mycobacterium bovis (strain ATCC BAA-935 / AF2122/97)).